Here is a 117-residue protein sequence, read N- to C-terminus: Cell cycle protein GpsB (117 aa).

Residues 32–70 (LDNVIKDYDAFVKENQRLQDENERLLAKVDELTRQVQVG) are a coiled coil.

This sequence belongs to the GpsB family. In terms of assembly, forms polymers through the coiled coil domains. Interacts with PBP1, MreC and EzrA.

Its subcellular location is the cytoplasm. In terms of biological role, divisome component that associates with the complex late in its assembly, after the Z-ring is formed, and is dependent on DivIC and PBP2B for its recruitment to the divisome. Together with EzrA, is a key component of the system that regulates PBP1 localization during cell cycle progression. Its main role could be the removal of PBP1 from the cell pole after pole maturation is completed. Also contributes to the recruitment of PBP1 to the division complex. Not essential for septum formation. The protein is Cell cycle protein GpsB of Levilactobacillus brevis (strain ATCC 367 / BCRC 12310 / CIP 105137 / JCM 1170 / LMG 11437 / NCIMB 947 / NCTC 947) (Lactobacillus brevis).